Reading from the N-terminus, the 370-residue chain is Proto-oncogene Wnt-1 (370 aa).

A signal peptide spans 1–27 (MGLWALLPSWVSTTLLLALTALPAALA). An N-linked (GlcNAc...) asparagine glycan is attached at N29. 11 disulfides stabilise this stretch: C93/C104, C143/C151, C153/C170, C218/C232, C220/C227, C299/C330, C315/C325, C329/C369, C345/C360, C347/C357, and C352/C353. A lipid anchor (O-palmitoleoyl serine; by PORCN) is attached at S224. 2 N-linked (GlcNAc...) asparagine glycosylation sites follow: N316 and N346. Residue N359 is glycosylated (N-linked (GlcNAc...) asparagine).

This sequence belongs to the Wnt family. As to quaternary structure, forms a soluble 1:1 complex with AFM; this prevents oligomerization and is required for prolonged biological activity. The complex with AFM may represent the physiological form in body fluids. Interacts with PORCN. Interacts with RSPO1, RSPO2 and RSPO3. Interacts with WLS. Palmitoleoylation is required for efficient binding to frizzled receptors. Palmitoleoylation is necessary for proper trafficking to cell surface. Depalmitoleoylated by NOTUM, leading to inhibit Wnt signaling pathway. In terms of tissue distribution, testis and mid-gestational embryos. In the testis, detected only in postmeiotic germ cells undergoing differentiation from round spermatids into mature spermatozoa. In the embryos, expression is restricted to the developing CNS in regions of the neural tube other than the telencephalon. Expressed in osteoblast; expression levels increase with advancing osteoblast differentiation. Expressed in the brain, femur, spleen, and hematopoietic bone marrow.

The protein resides in the secreted. The protein localises to the extracellular space. Its subcellular location is the extracellular matrix. Its function is as follows. Ligand for members of the frizzled family of seven transmembrane receptors. Acts in the canonical Wnt signaling pathway by promoting beta-catenin-dependent transcriptional activation. In some developmental processes, is also a ligand for the coreceptor RYK, thus triggering Wnt signaling. Plays an essential role in the development of the embryonic brain and central nervous system (CNS). Has a role in osteoblast function, bone development and bone homeostasis. The protein is Proto-oncogene Wnt-1 (Wnt1) of Mus musculus (Mouse).